Consider the following 342-residue polypeptide: Ferredoxin--NADP reductase (342 aa).

8 residues coordinate FAD: Cys17, Asp36, Gln44, Tyr49, Ile89, Phe124, Asp289, and Thr330.

It belongs to the ferredoxin--NADP reductase type 2 family. Homodimer. FAD serves as cofactor.

It carries out the reaction 2 reduced [2Fe-2S]-[ferredoxin] + NADP(+) + H(+) = 2 oxidized [2Fe-2S]-[ferredoxin] + NADPH. The sequence is that of Ferredoxin--NADP reductase from Rhodopseudomonas palustris (strain BisB18).